Reading from the N-terminus, the 524-residue chain is GMP synthase [glutamine-hydrolyzing] (524 aa).

Residues 12–201 form the Glutamine amidotransferase type-1 domain; that stretch reads TILVLDFGSQ…AVDICKASQS (190 aa). Residue C88 is the Nucleophile of the active site. Active-site residues include H175 and E177. The GMPS ATP-PPase domain occupies 202–399; it reads WNMENFIDTE…LGISHELVWR (198 aa). ATP is bound at residue 230–236; it reads SGGVDST. 4 residues coordinate XMP: R303, D461, K516, and E522.

Homodimer. Mg(2+) serves as cofactor.

The protein resides in the cytoplasm. It localises to the cytosol. The catalysed reaction is XMP + L-glutamine + ATP + H2O = GMP + L-glutamate + AMP + diphosphate + 2 H(+). It functions in the pathway purine metabolism; GMP biosynthesis; GMP from XMP (L-Gln route): step 1/1. Functionally, catalyzes the conversion of xanthine monophosphate (XMP) to GMP in the presence of glutamine and ATP through an adenyl-XMP intermediate. The sequence is that of GMP synthase [glutamine-hydrolyzing] (GUA1) from Kluyveromyces lactis (strain ATCC 8585 / CBS 2359 / DSM 70799 / NBRC 1267 / NRRL Y-1140 / WM37) (Yeast).